The sequence spans 615 residues: RNA polymerase sigma factor RpoD (615 aa).

The interval 177–215 (APTATHVGSELSQEDLDDDEDEDEEDGDDDAADDDNSID) is disordered. Over residues 188–214 (SQEDLDDDEDEDEEDGDDDAADDDNSI) the composition is skewed to acidic residues. A sigma-70 factor domain-2 region spans residues 381–451 (MVEANLRLVI…TRSIADQART (71 aa)). An Interaction with polymerase core subunit RpoC motif is present at residues 405–408 (DLIQ). Residues 460 to 536 (ETINKLNRIS…DTTLELPLDS (77 aa)) are sigma-70 factor domain-3. The sigma-70 factor domain-4 stretch occupies residues 549-602 (VLAGLTAREAKVLRMRFGIDMNTDHTLEEVGKQFDVTRERIRQIEAKALRKLRH). The H-T-H motif DNA-binding region spans 575–594 (LEEVGKQFDVTRERIRQIEA).

It belongs to the sigma-70 factor family. RpoD/SigA subfamily. As to quaternary structure, interacts transiently with the RNA polymerase catalytic core.

The protein resides in the cytoplasm. Its function is as follows. Sigma factors are initiation factors that promote the attachment of RNA polymerase to specific initiation sites and are then released. This sigma factor is the primary sigma factor during exponential growth. This is RNA polymerase sigma factor RpoD from Salmonella typhi.